The following is a 403-amino-acid chain: tRNA methyltransferase 10 homolog C (403 aa).

The transit peptide at Met1–Tyr39 directs the protein to the mitochondrion. Ser84 is modified (phosphoserine). A coiled-coil region spans residues Thr138–Thr169. Residues Met191–Gly383 enclose the SAM-dependent MTase TRM10-type domain.

Belongs to the class IV-like SAM-binding methyltransferase superfamily. TRM10 family. As to quaternary structure, component of mitochondrial ribonuclease P, a complex composed of TRMT10C/MRPP1, HSD17B10/MRPP2 and PRORP/MRPP3. Interacts with HSD17B10/MRPP2; forming the MRPP1-MRPP2 subcomplex of the mitochondrial ribonuclease P complex. Interacts with GRSF1.

The protein resides in the mitochondrion matrix. Its subcellular location is the mitochondrion nucleoid. It catalyses the reaction adenosine(9) in tRNA + S-adenosyl-L-methionine = N(1)-methyladenosine(9) in tRNA + S-adenosyl-L-homocysteine + H(+). It carries out the reaction guanosine(9) in tRNA + S-adenosyl-L-methionine = N(1)-methylguanosine(9) in tRNA + S-adenosyl-L-homocysteine + H(+). The enzyme catalyses an adenosine in mRNA + S-adenosyl-L-methionine = an N(1)-methyladenosine in mRNA + S-adenosyl-L-homocysteine + H(+). Functionally, mitochondrial tRNA N(1)-methyltransferase involved in mitochondrial tRNA maturation. Component of mitochondrial ribonuclease P, a complex composed of TRMT10C/MRPP1, HSD17B10/MRPP2 and PRORP/MRPP3, which cleaves tRNA molecules in their 5'-ends. Together with HSD17B10/MRPP2, forms a subcomplex of the mitochondrial ribonuclease P, named MRPP1-MRPP2 subcomplex, which displays functions that are independent of the ribonuclease P activity. The MRPP1-MRPP2 subcomplex catalyzes the formation of N(1)-methylguanine and N(1)-methyladenine at position 9 (m1G9 and m1A9, respectively) in tRNAs; TRMT10C/MRPP1 acting as the catalytic N(1)-methyltransferase subunit. The MRPP1-MRPP2 subcomplex also acts as a tRNA maturation platform: following 5'-end cleavage by the mitochondrial ribonuclease P complex, the MRPP1-MRPP2 subcomplex enhances the efficiency of 3'-processing catalyzed by ELAC2, retains the tRNA product after ELAC2 processing and presents the nascent tRNA to the mitochondrial CCA tRNA nucleotidyltransferase TRNT1 enzyme. In addition to tRNA N(1)-methyltransferase activity, TRMT10C/MRPP1 also acts as a mRNA N(1)-methyltransferase by mediating methylation of adenosine residues at the N(1) position of MT-ND5 mRNA. Associates with mitochondrial DNA complexes at the nucleoids to initiate RNA processing and ribosome assembly. The polypeptide is tRNA methyltransferase 10 homolog C (Homo sapiens (Human)).